The primary structure comprises 150 residues: Large ribosomal subunit protein bL9 (150 aa).

The protein belongs to the bacterial ribosomal protein bL9 family.

Its function is as follows. Binds to the 23S rRNA. The chain is Large ribosomal subunit protein bL9 from Pectobacterium atrosepticum (strain SCRI 1043 / ATCC BAA-672) (Erwinia carotovora subsp. atroseptica).